The following is a 52-amino-acid chain: UPF0391 membrane protein ABAYE0050 (52 aa).

2 helical membrane passes run 6–26 and 30–50; these read IIFAVIALIASLLGFGGVAGL and FAVILLVIAVILAVIGFISRG.

The protein belongs to the UPF0391 family.

It is found in the cell membrane. This Acinetobacter baumannii (strain AYE) protein is UPF0391 membrane protein ABAYE0050.